We begin with the raw amino-acid sequence, 214 residues long: Charged multivesicular body protein 2b (214 aa).

Residues 25-55 adopt a coiled-coil conformation; sequence QRTITRDRAALEKQERQLELEIKKMAKTGNK. The segment at 179–201 is disordered; the sequence is AKAPSAARGLPSASTSKASTISD. Polar residues predominate over residues 190 to 199; sequence SASTSKASTI. The MIT-interacting motif motif lies at 202–212; that stretch reads EEIERQLKALG.

This sequence belongs to the SNF7 family. As to quaternary structure, probable core component of the endosomal sorting required for transport complex III (ESCRT-III). ESCRT-III components are thought to multimerize to form a flat lattice on the perimeter membrane of the endosome.

The protein localises to the cytoplasm. It localises to the cytosol. The protein resides in the late endosome membrane. In terms of biological role, probable core component of the endosomal sorting required for transport complex III (ESCRT-III) which is involved in multivesicular bodies (MVBs) formation and sorting of endosomal cargo proteins into MVBs. MVBs contain intraluminal vesicles (ILVs) that are generated by invagination and scission from the limiting membrane of the endosome and mostly are delivered to lysosomes enabling degradation of membrane proteins, such as stimulated growth factor receptors, lysosomal enzymes and lipids. In Gallus gallus (Chicken), this protein is Charged multivesicular body protein 2b (CHMP2B).